Reading from the N-terminus, the 174-residue chain is uncharacterized protein (174 aa).

Belongs to the mimivirus L39/R874 family.

This is an uncharacterized protein from Acanthamoeba polyphaga (Amoeba).